The primary structure comprises 876 residues: Alanine--tRNA ligase (876 aa).

Positions 565, 569, 667, and 671 each coordinate Zn(2+).

It belongs to the class-II aminoacyl-tRNA synthetase family. The cofactor is Zn(2+).

It localises to the cytoplasm. The enzyme catalyses tRNA(Ala) + L-alanine + ATP = L-alanyl-tRNA(Ala) + AMP + diphosphate. Catalyzes the attachment of alanine to tRNA(Ala) in a two-step reaction: alanine is first activated by ATP to form Ala-AMP and then transferred to the acceptor end of tRNA(Ala). Also edits incorrectly charged Ser-tRNA(Ala) and Gly-tRNA(Ala) via its editing domain. The chain is Alanine--tRNA ligase from Staphylococcus aureus (strain bovine RF122 / ET3-1).